A 342-amino-acid polypeptide reads, in one-letter code: Pre-mRNA-splicing factor 18 (342 aa).

Met1 is modified (N-acetylmethionine).

This sequence belongs to the PRP18 family. As to quaternary structure, heterodimer with PPIH. Interacts with PRPF4 and with the spliceosome. Part of a complex containing U4/U6 snRNPs. Also detected in the cytoplasm. As to expression, detected in brain, heart, liver and skeletal muscle.

It is found in the nucleus speckle. Participates in the second step of pre-mRNA splicing. Down-regulates the expression of potassium channel subunits. The chain is Pre-mRNA-splicing factor 18 (Prpf18) from Rattus norvegicus (Rat).